A 473-amino-acid chain; its full sequence is Dynein axonemal assembly factor 11 (473 aa).

4 LRR repeats span residues 22-43 (SLEE…DKWC), 45-66 (DLKI…SKLK), 67-88 (KLEY…EGCE), and 89-110 (WLTK…KTLT). The 39-residue stretch at 123-161 (NPCADFDGYRQFVVVTLQQLKWLDGKEIERSERIQALQN) folds into the LRRCT domain. Residues 153 to 205 (SERIQALQNYTSVEQQIREQEKAYCLRRAKEKEEAQRKLEEENESEDKKKSST) adopt a coiled-coil conformation. Basic and acidic residues-rich tracts occupy residues 188–202 (QRKL…DKKK) and 273–283 (EKQRKAQDKLS). 3 disordered regions span residues 188–244 (QRKL…TKES), 273–292 (EKQR…AKPP), and 387–473 (VGEM…PPLI). The CS domain maps to 305-402 (VNEAKLDFSL…GGQRTPTSVK (98 aa)). Residues 397 to 408 (TPTSVKTTSTSS) are compositionally biased toward low complexity. Positions 417 to 431 (KQIERLEVDPSKHSC) are enriched in basic and acidic residues. A compositionally biased stretch (acidic residues) spans 456–467 (PSEEDPDFEDNP).

The protein belongs to the tilB family. In terms of assembly, interacts (via CS domain) with ZMYND10 (via C-terminus). In terms of tissue distribution, mainly expressed in cells with motile cilia. Expressed in epithelial cells of the trachea, testis and ependymal cells of the cerebral ventricles. In testis, abundant expression in late prophase of meiosis I with a dramatic decrease after the first meiotic division (at protein level).

The protein resides in the cytoplasm. It is found in the cell projection. It localises to the cilium. The protein localises to the dynein axonemal particle. Its subcellular location is the flagellum. In terms of biological role, involved in dynein arm assembly, is important for expression and transporting outer dynein arm (ODA) proteins from the cytoplasm to the cilia. Acts as a crucial component in the formation and motility of spermatozoal flagella. In Mus musculus (Mouse), this protein is Dynein axonemal assembly factor 11 (Dnaaf11).